A 282-amino-acid polypeptide reads, in one-letter code: NADPH-dependent 7-cyano-7-deazaguanine reductase (282 aa).

82–84 (IES) contacts substrate. 84-85 (SK) lines the NADPH pocket. Cysteine 189 serves as the catalytic Thioimide intermediate. Residue aspartate 196 is the Proton donor of the active site. 228 to 229 (HE) contributes to the substrate binding site. NADPH is bound at residue 257–258 (RG).

Belongs to the GTP cyclohydrolase I family. QueF type 2 subfamily. As to quaternary structure, homodimer.

The protein resides in the cytoplasm. The catalysed reaction is 7-aminomethyl-7-carbaguanine + 2 NADP(+) = 7-cyano-7-deazaguanine + 2 NADPH + 3 H(+). The protein operates within tRNA modification; tRNA-queuosine biosynthesis. Its function is as follows. Catalyzes the NADPH-dependent reduction of 7-cyano-7-deazaguanine (preQ0) to 7-aminomethyl-7-deazaguanine (preQ1). The chain is NADPH-dependent 7-cyano-7-deazaguanine reductase from Delftia acidovorans (strain DSM 14801 / SPH-1).